Consider the following 423-residue polypeptide: Aspartic protease-like protein pytH (423 aa).

An N-terminal signal peptide occupies residues 1-16 (MWLSVALLTLLDGALA). In terms of domain architecture, Peptidase A1 spans 38–416 (TTDAIQIGTP…DFDKLRVGLA (379 aa)). Asp56 is an active-site residue. 6 N-linked (GlcNAc...) asparagine glycosylation sites follow: Asn88, Asn97, Asn168, Asn196, Asn231, and Asn279. Asp291 is a catalytic residue. Residue Asn330 is glycosylated (N-linked (GlcNAc...) asparagine). An intrachain disulfide couples Cys338 to Cys377.

The protein belongs to the peptidase A1 family.

The protein operates within secondary metabolite biosynthesis. In terms of biological role, aspartic protease-like protein; part of the gene cluster that mediates the biosynthesis of pyranterreones, a family of antioxidative compounds. The first step of pyranonigrins biosynthesis is performed by the hybrid PKS-NRPS synthetase pytA that condenses 4 malonyl-CoA units ato the acetyl starter unit by the modular PKS of pytA. The acyl chain is then connected to an L-serine through the amide bond by the modular NRPS of pytA. A tetramic acid is formed and released from the PKS-NRPS pytA to give pyranterreone 5 with the help of the thioesterase pytI. Pyranterreone 5 could be methylated by pytC to afford pyranterreone 6. Both pyranterreones 5 and 6 are subsequently oxidized by the FAD-linked oxidoreductase pytB and the cytochrome P450 monooxygenase pytD to form the fused gamma-pyrone core, resulting in pyranterreones 7 and 11, respectively. The hydroxy group at C-8 of pyranterreones 7 and 11 are dehydrated by the aspartyl protease pytH to form a delta-7 double bond to give pyranterreones 3 and 1, 2 accordingly. The exo-methylene of pyranterreone 3 could be reduced into a pendant methyl by reductase pytE to provide pyranterreone 4, also known as cordylactam. Pyranterreone 4 can be reconverted to pyranterreone 3 through pytB-catalyzed dehydrogenation or further oxidized to pyranterreones 9 and 10. In Aspergillus terreus (strain NIH 2624 / FGSC A1156), this protein is Aspartic protease-like protein pytH.